Consider the following 213-residue polypeptide: Protein MobE (213 aa).

The polypeptide is Protein MobE (mobE) (Acidithiobacillus ferrooxidans (Thiobacillus ferrooxidans)).